The chain runs to 974 residues: Coiled-coil domain-containing protein 146 (974 aa).

Residues 1–44 (MEDRSKYIAEESEDEEDEEQEEKEKKGGASTSTETEEDQEDIPS) form a disordered region. Acidic residues predominate over residues 10–21 (EESEDEEDEEQE). Ser-12 carries the post-translational modification Phosphoserine. 6 coiled-coil regions span residues 105 to 160 (VQLL…QERE), 195 to 340 (KLLK…TKEN), 421 to 474 (LPEQ…REVL), 512 to 660 (KKLE…NESG), 687 to 712 (QDIE…QRQI), and 767 to 848 (LTEE…ELSM).

As to quaternary structure, interacts with CCDC38 and CCDC42. Interacts with intraflagellar transport proteins IFT20 and IFT88.

Its subcellular location is the cytoplasm. It is found in the cytoskeleton. The protein localises to the microtubule organizing center. The protein resides in the centrosome. It localises to the centriole. Its subcellular location is the cell projection. It is found in the cilium. The protein localises to the flagellum. The protein resides in the flagellum axoneme. It localises to the cilium basal body. Its subcellular location is the midbody. Essential for sperm flagellum biogenesis and male fertility. In Rattus norvegicus (Rat), this protein is Coiled-coil domain-containing protein 146 (Ccdc146).